Reading from the N-terminus, the 115-residue chain is NADH-ubiquinone oxidoreductase chain 3 (115 aa).

3 helical membrane-spanning segments follow: residues 4–24 (LMAL…AFWL), 55–75 (FFLV…LLPL), and 86–106 (TMML…AYEW).

This sequence belongs to the complex I subunit 3 family. In terms of assembly, core subunit of respiratory chain NADH dehydrogenase (Complex I) which is composed of 45 different subunits. Interacts with TMEM186. Interacts with TMEM242.

It is found in the mitochondrion inner membrane. It carries out the reaction a ubiquinone + NADH + 5 H(+)(in) = a ubiquinol + NAD(+) + 4 H(+)(out). Its function is as follows. Core subunit of the mitochondrial membrane respiratory chain NADH dehydrogenase (Complex I) which catalyzes electron transfer from NADH through the respiratory chain, using ubiquinone as an electron acceptor. Essential for the catalytic activity of complex I. This is NADH-ubiquinone oxidoreductase chain 3 from Peromyscus gossypinus (Cotton deermouse).